We begin with the raw amino-acid sequence, 1856 residues long: Zinc metalloprotease ZmpC (1856 aa).

The N-terminal stretch at 1-42 (MSRKSIGEKRHSFSMRKLSVGLVSVTVSSFFLMSQGIQSVSA) is a signal peptide. Positions 43–95 (DNMESPIHYKYMTEGKLTDEEKSLLVEALPQLAEESDDTYYLVYRSQQFLPNT) are excised as a propeptide. Positions 92–96 (LPNTG) match the LPXTG sorting signal motif. Thr-95 carries the pentaglycyl murein peptidoglycan amidated threonine modification. A run of 2 helical transmembrane segments spans residues 97–117 (FNPT…VLLV) and 130–152 (FLLL…TSQI). The Extracellular portion of the chain corresponds to 153–1856 (LSAYNSQLSI…TDDFRNSIYK (1704 aa)). 2 stretches are compositionally biased toward polar residues: residues 254-267 (NLSS…QVEQ) and 286-295 (NPVSATTVQS). Positions 254–362 (NLSSNDSFAS…GEAAVREEEP (109 aa)) are disordered. Composition is skewed to basic and acidic residues over residues 322–334 (PGHE…REDL) and 351–361 (HEGEAAVREEE). The G5 domain maps to 417–496 (ALEVTTRNRT…NEVVKVGTLV (80 aa)). His-1502 contacts Zn(2+). Glu-1503 is a catalytic residue. Zn(2+) is bound by residues His-1506 and Glu-1526.

The protein belongs to the peptidase M26 family. It depends on Zn(2+) as a cofactor. Post-translationally, the Gram-positive cell-wall anchor motif LPXTG is located in the N-terminal part, in contrast to such motifs in other known streptococcal and staphylococcal proteins. The protease could be cleaved by the sortase and anchored in the membrane via the two potential N-terminal transmembrane domains, whereas the propeptide located prior to the LPXTG motif would remain attached to the cell wall peptidoglycan by an amide bond.

It localises to the secreted. It is found in the cell wall. The protein localises to the membrane. In terms of biological role, zinc metalloproteinase that specifically cleaves human matrix metalloproteinase 9 (MMP-9), leading to its activation. May play a role in pneumococcal virulence and pathogenicity in the lung. This chain is Zinc metalloprotease ZmpC (zmpC), found in Streptococcus pneumoniae serotype 4 (strain ATCC BAA-334 / TIGR4).